The primary structure comprises 369 residues: Putative agmatine deiminase (369 aa).

The Amidino-cysteine intermediate role is filled by C355.

This sequence belongs to the agmatine deiminase family.

It carries out the reaction agmatine + H2O = N-carbamoylputrescine + NH4(+). The chain is Putative agmatine deiminase from Marinomonas sp. (strain MWYL1).